We begin with the raw amino-acid sequence, 312 residues long: Aquaglyceroporin-2 (312 aa).

Helical transmembrane passes span 78-98, 104-124, 151-171, 203-223, 239-259, and 286-306; these read FLGN…SLLV, LGLT…SLGI, YIAA…GVFA, GIFY…LCVC, VAIG…SPLA, and YYFW…LFLY.

The protein belongs to the MIP/aquaporin (TC 1.A.8) family.

It localises to the membrane. It carries out the reaction glycerol(in) = glycerol(out). It catalyses the reaction H2O(in) = H2O(out). The catalysed reaction is urea(in) = urea(out). Mediates water and glycerol transport across cell membranes. Permeable to urea. Permeable to methylamine/methylammonium. Permeable to dihydroxyacetone. The chain is Aquaglyceroporin-2 from Trypanosoma brucei brucei.